We begin with the raw amino-acid sequence, 600 residues long: Putative acetyltransferase MPN_114 (600 aa).

The active-site Proton acceptor is the His-323. Residue 396–409 (TKPLIKAKGIKNSE) coordinates CoA.

This sequence belongs to the carnitine/choline acetyltransferase family.

This Mycoplasma pneumoniae (strain ATCC 29342 / M129 / Subtype 1) (Mycoplasmoides pneumoniae) protein is Putative acetyltransferase MPN_114.